A 694-amino-acid polypeptide reads, in one-letter code: Nuclear factor erythroid 2-related factor 3 (694 aa).

Positions 133 to 150 are enriched in low complexity; the sequence is ASSTGGAGASVDGGSQAV. 2 disordered regions span residues 133–256 and 330–357; these read ASST…LNGT and DPTA…QTLP. Basic and acidic residues-rich tracts occupy residues 193 to 217 and 231 to 254; these read GVLR…RVSA and NKIA…RHLN. Residues 333–357 are compositionally biased toward polar residues; it reads ARTSQSQEPFLQLNSHTTNPEQTLP. Residues 578–641 enclose the bZIP domain; that stretch reads LIRDIRRRGK…NIMKQKLHDL (64 aa). The segment at 580–599 is basic motif; sequence RDIRRRGKNKVAAQNCRKRK. Positions 606–620 are leucine-zipper; the sequence is LEDDVCNLQAKKETL.

The protein belongs to the bZIP family. CNC subfamily. In terms of assembly, heterodimer with MAFG, MAFK and other small MAF proteins that binds to the MAF recognition elements (MARE). As to expression, highly expressed in human placenta and also in B-cell and monocyte cell lines. Low expression in heart, brain, lung, skeletal muscle, kidney and pancreas.

The protein resides in the nucleus. Its function is as follows. Activates erythroid-specific, globin gene expression. This chain is Nuclear factor erythroid 2-related factor 3 (NFE2L3), found in Homo sapiens (Human).